A 488-amino-acid chain; its full sequence is Ribulose bisphosphate carboxylase large chain 1 (488 aa).

Substrate contacts are provided by Asn127 and Thr177. Lys179 acts as the Proton acceptor in catalysis. Lys181 is a substrate binding site. 3 residues coordinate Mg(2+): Lys205, Asp207, and Glu208. Lys205 is subject to N6-carboxylysine. His297 acts as the Proton acceptor in catalysis. Positions 298, 330, and 382 each coordinate substrate.

It belongs to the RuBisCO large chain family. Type I subfamily. In terms of assembly, heterohexadecamer of 8 large chains and 8 small chains. Requires Mg(2+) as cofactor.

It catalyses the reaction 2 (2R)-3-phosphoglycerate + 2 H(+) = D-ribulose 1,5-bisphosphate + CO2 + H2O. The enzyme catalyses D-ribulose 1,5-bisphosphate + O2 = 2-phosphoglycolate + (2R)-3-phosphoglycerate + 2 H(+). RuBisCO catalyzes two reactions: the carboxylation of D-ribulose 1,5-bisphosphate, the primary event in carbon dioxide fixation, as well as the oxidative fragmentation of the pentose substrate. Both reactions occur simultaneously and in competition at the same active site. In Bradyrhizobium sp. (strain BTAi1 / ATCC BAA-1182), this protein is Ribulose bisphosphate carboxylase large chain 1.